Reading from the N-terminus, the 274-residue chain is Diaminopimelate epimerase (274 aa).

The substrate site is built by asparagine 11, glutamine 44, and asparagine 64. The active-site Proton donor is the cysteine 73. Residues 74 to 75, asparagine 157, asparagine 190, and 208 to 209 contribute to the substrate site; these read GN and ER. Cysteine 217 acts as the Proton acceptor in catalysis. 218–219 serves as a coordination point for substrate; the sequence is GS.

It belongs to the diaminopimelate epimerase family. Homodimer.

Its subcellular location is the cytoplasm. It catalyses the reaction (2S,6S)-2,6-diaminopimelate = meso-2,6-diaminopimelate. Its pathway is amino-acid biosynthesis; L-lysine biosynthesis via DAP pathway; DL-2,6-diaminopimelate from LL-2,6-diaminopimelate: step 1/1. In terms of biological role, catalyzes the stereoinversion of LL-2,6-diaminopimelate (L,L-DAP) to meso-diaminopimelate (meso-DAP), a precursor of L-lysine and an essential component of the bacterial peptidoglycan. The sequence is that of Diaminopimelate epimerase from Yersinia pseudotuberculosis serotype O:1b (strain IP 31758).